The following is a 302-amino-acid chain: 4-diphosphocytidyl-2-C-methyl-D-erythritol kinase (302 aa).

Lys-20 is an active-site residue. 106–116 (PVASGVGGGSG) lines the ATP pocket. Asp-148 is a catalytic residue.

Belongs to the GHMP kinase family. IspE subfamily.

It carries out the reaction 4-CDP-2-C-methyl-D-erythritol + ATP = 4-CDP-2-C-methyl-D-erythritol 2-phosphate + ADP + H(+). The protein operates within isoprenoid biosynthesis; isopentenyl diphosphate biosynthesis via DXP pathway; isopentenyl diphosphate from 1-deoxy-D-xylulose 5-phosphate: step 3/6. Its function is as follows. Catalyzes the phosphorylation of the position 2 hydroxy group of 4-diphosphocytidyl-2C-methyl-D-erythritol. The chain is 4-diphosphocytidyl-2-C-methyl-D-erythritol kinase from Bartonella henselae (strain ATCC 49882 / DSM 28221 / CCUG 30454 / Houston 1) (Rochalimaea henselae).